A 359-amino-acid chain; its full sequence is Glycerol-3-phosphate dehydrogenase [NAD(P)+] (359 aa).

NADPH is bound by residues Thr-11, Trp-12, Arg-32, and Lys-107. Sn-glycerol 3-phosphate is bound by residues Lys-107 and Gly-138. Ala-142 is an NADPH binding site. Sn-glycerol 3-phosphate contacts are provided by Lys-193, Asp-246, Ser-256, Arg-257, and Asn-258. The Proton acceptor role is filled by Lys-193. Arg-257 serves as a coordination point for NADPH. Residues Val-281 and Glu-283 each contribute to the NADPH site.

The protein belongs to the NAD-dependent glycerol-3-phosphate dehydrogenase family.

The protein localises to the cytoplasm. The enzyme catalyses sn-glycerol 3-phosphate + NAD(+) = dihydroxyacetone phosphate + NADH + H(+). It catalyses the reaction sn-glycerol 3-phosphate + NADP(+) = dihydroxyacetone phosphate + NADPH + H(+). It participates in membrane lipid metabolism; glycerophospholipid metabolism. In terms of biological role, catalyzes the reduction of the glycolytic intermediate dihydroxyacetone phosphate (DHAP) to sn-glycerol 3-phosphate (G3P), the key precursor for phospholipid synthesis. In Dehalococcoides mccartyi (strain ATCC BAA-2266 / KCTC 15142 / 195) (Dehalococcoides ethenogenes (strain 195)), this protein is Glycerol-3-phosphate dehydrogenase [NAD(P)+].